The sequence spans 50 residues: MARYRCCRSHSRSRCRPRRRRCRRRRRRCCPRRRRAVCCRRYTVIRCRRC.

Disulfide bonds link Cys7/Cys15 and Cys39/Cys47.

This sequence belongs to the protamine P1 family. In terms of assembly, cross-linked by interchain disulfide bonds around the DNA-helix. As to expression, testis.

The protein resides in the nucleus. The protein localises to the chromosome. In terms of biological role, protamines substitute for histones in the chromatin of sperm during the haploid phase of spermatogenesis. They compact sperm DNA into a highly condensed, stable and inactive complex. The protein is Sperm protamine P1 (PRM1) of Sus scrofa (Pig).